The following is a 379-amino-acid chain: MRATKAIIHLDNLQYNIKEIKKRLNKNVKICLPVKADAYGHGAVRVAVAAIRAGVSYLAVASIQEAVELREAGIVAPIISLSLPVLEEIPELLKYDIEPLVIDEEFINDLNRFAKKLNKKAWVHLKIDTGMRRIGCSPMEAVKLAVQIDRAENLELKGVCTHFAVSDSTDEKNIKFTKKQISVFKDSIKEIKKAGINPGLIHAANSGSVLQYPEAQFDMVRPGILVYGYAPSPSLNSLIDLKPVMELVTQVVLIKKIEKDTSVSYDRCWTAEKETFVATLPIGYADGLMRSLSGLKVRIGKDFFPIIGRICMDQCMIDIGASPWVQRWDEVCIFGPVSKEHPKNNTAQDLAKIAGTIPYELTCDINKRVPRIFIDETIQ.

Catalysis depends on lysine 35, which acts as the Proton acceptor; specific for D-alanine. N6-(pyridoxal phosphate)lysine is present on lysine 35. Residue arginine 133 participates in substrate binding. The Proton acceptor; specific for L-alanine role is filled by tyrosine 265. Methionine 312 lines the substrate pocket.

Belongs to the alanine racemase family. It depends on pyridoxal 5'-phosphate as a cofactor.

It carries out the reaction L-alanine = D-alanine. Its pathway is amino-acid biosynthesis; D-alanine biosynthesis; D-alanine from L-alanine: step 1/1. Catalyzes the interconversion of L-alanine and D-alanine. May also act on other amino acids. This chain is Alanine racemase (alr), found in Treponema denticola (strain ATCC 35405 / DSM 14222 / CIP 103919 / JCM 8153 / KCTC 15104).